A 402-amino-acid chain; its full sequence is Serine/threonine transporter SstT (402 aa).

The next 9 helical transmembrane spans lie at 19 to 39 (IGVV…AIGL), 43 to 63 (LFVG…VISA), 86 to 106 (TFAA…TLIL), 138 to 158 (AITE…GLAM), 179 to 199 (VVKW…FTSI), 212 to 232 (LLIL…NPII), 287 to 307 (IPLG…ILTL), 327 to 347 (VVAA…LLLI), and 354 to 374 (FGIS…VGVI).

This sequence belongs to the dicarboxylate/amino acid:cation symporter (DAACS) (TC 2.A.23) family.

Its subcellular location is the cell membrane. The catalysed reaction is L-serine(in) + Na(+)(in) = L-serine(out) + Na(+)(out). It carries out the reaction L-threonine(in) + Na(+)(in) = L-threonine(out) + Na(+)(out). Its function is as follows. Involved in the import of serine and threonine into the cell, with the concomitant import of sodium (symport system). The sequence is that of Serine/threonine transporter SstT from Streptococcus agalactiae serotype III (strain NEM316).